Here is a 154-residue protein sequence, read N- to C-terminus: Endoribonuclease YbeY (154 aa).

Zn(2+)-binding residues include His117, His121, and His127.

The protein belongs to the endoribonuclease YbeY family. Zn(2+) serves as cofactor.

Its subcellular location is the cytoplasm. Its function is as follows. Single strand-specific metallo-endoribonuclease involved in late-stage 70S ribosome quality control and in maturation of the 3' terminus of the 16S rRNA. In Mycoplasma pneumoniae (strain ATCC 29342 / M129 / Subtype 1) (Mycoplasmoides pneumoniae), this protein is Endoribonuclease YbeY.